A 231-amino-acid polypeptide reads, in one-letter code: Orotidine 5'-phosphate decarboxylase (231 aa).

Residues Asp-11, Lys-33, 60-69 (DLKFHDIPNT), Thr-117, Arg-178, Gln-187, Gly-207, and Arg-208 each bind substrate. Residue Lys-62 is the Proton donor of the active site.

This sequence belongs to the OMP decarboxylase family. Type 1 subfamily. Homodimer.

It catalyses the reaction orotidine 5'-phosphate + H(+) = UMP + CO2. It participates in pyrimidine metabolism; UMP biosynthesis via de novo pathway; UMP from orotate: step 2/2. Catalyzes the decarboxylation of orotidine 5'-monophosphate (OMP) to uridine 5'-monophosphate (UMP). This is Orotidine 5'-phosphate decarboxylase from Nitrosomonas europaea (strain ATCC 19718 / CIP 103999 / KCTC 2705 / NBRC 14298).